A 333-amino-acid chain; its full sequence is Biotin synthase (333 aa).

The Radical SAM core domain occupies 47–276 (FFKNQMEFCS…KSEIRLCGGR (230 aa)). [4Fe-4S] cluster contacts are provided by Cys-65, Cys-69, and Cys-72. [2Fe-2S] cluster is bound by residues Cys-109, Cys-141, Cys-201, and Arg-271.

It belongs to the radical SAM superfamily. Biotin synthase family. As to quaternary structure, homodimer. [4Fe-4S] cluster serves as cofactor. [2Fe-2S] cluster is required as a cofactor.

It catalyses the reaction (4R,5S)-dethiobiotin + (sulfur carrier)-SH + 2 reduced [2Fe-2S]-[ferredoxin] + 2 S-adenosyl-L-methionine = (sulfur carrier)-H + biotin + 2 5'-deoxyadenosine + 2 L-methionine + 2 oxidized [2Fe-2S]-[ferredoxin]. It functions in the pathway cofactor biosynthesis; biotin biosynthesis; biotin from 7,8-diaminononanoate: step 2/2. Its function is as follows. Catalyzes the conversion of dethiobiotin (DTB) to biotin by the insertion of a sulfur atom into dethiobiotin via a radical-based mechanism. The sequence is that of Biotin synthase from Sulfurihydrogenibium sp. (strain YO3AOP1).